We begin with the raw amino-acid sequence, 908 residues long: MTDSQDKVNGGSKNTFLSRVFGVHSSAVENSLDAAEMSHITMPTEQDFSNYAEDEGNVRLIESDQEPSSSNEDSNDEEPLIQQPQSIRFDTASDGMATIQSESEPDEGGTEEDEVHLEEEDFSDQDLASSVSKYGQPSSSEDEEPLSNRDSNRGSDETIPFIGRQRLNLGGKNPITGATKSTKNPSESRVFERLLGNSPAKMFRNNGRPNNLEESFLFRKPSVAEQSGPGKSTHFNLKPPPIFNNISTLTSTSKNSLSSLSPKERALWKWANIENLDTFLQQVYEYYLGNGFYCIITEKVIHLATILFVVFISTYMGHCIDYSRLSSSHTFEEIHIEQCYKTQISPTAKVFLWIFYAFIGLKVLQLYFDVKALKDIRNFYNYLLSISDKDLQTIPWQSVIQQLVLLKDQNAITANATEVKAKNRLSAHDVANRIMRKENFVIALYDNNILDLSLPVPLLRTCALTKTLEWNINLCILGFAFNEKGYLKQAFLRESQREYLGEELKKRFVLAGFLNIILSPFLVTYFVLLNFFRYFNEYKTSPGSIGSRQYTPIAEWKFREYNELYHIFQKRMRLSMIIADNYVNQFPNTLLSLTLSFIQFVSGSFVAILGILTIFDPDNFLNFEITPDRTVLFYMTVFGTLWAVCHSSINDEYTVLKPEETLEELVSYTHYAPKEWKGKYHTEDIKNEFCRLYNLRITLLLRELVSIIITPFILWFSLPKNSERIIDFFRECTVYEEGLGYVCKYAMFEATKIDKGTKAKKQTKRMFSQAEQDDSETESDEGVNKMLQSYMYFVDDYKNAGNAVGKNQLPASPIEPSYHPYSSTKDYSWKTQFALGKNSNRKRNLNRSRVKRFPDRSSDLELGSLSGSLINKSTLFKDDIADNADELKAGNGVMGLLNQYYKKSDRNR.

The Cytoplasmic portion of the chain corresponds to 1 to 299 (MTDSQDKVNG…NGFYCIITEK (299 aa)). The interval 37–188 (MSHITMPTEQ…TKSTKNPSES (152 aa)) is disordered. The span at 103–124 (SEPDEGGTEEDEVHLEEEDFSD) shows a compositional bias: acidic residues. The span at 126–139 (DLASSVSKYGQPSS) shows a compositional bias: polar residues. Over residues 146–156 (LSNRDSNRGSD) the composition is skewed to basic and acidic residues. The segment covering 176–187 (TGATKSTKNPSE) has biased composition (polar residues). A helical membrane pass occupies residues 300–320 (VIHLATILFVVFISTYMGHCI). Topologically, residues 321 to 349 (DYSRLSSSHTFEEIHIEQCYKTQISPTAK) are lumenal. A helical membrane pass occupies residues 350 to 370 (VFLWIFYAFIGLKVLQLYFDV). Over 371-507 (KALKDIRNFY…EYLGEELKKR (137 aa)) the chain is Cytoplasmic. The stretch at 508 to 528 (FVLAGFLNIILSPFLVTYFVL) is an intramembrane region. Residues 529–594 (LNFFRYFNEY…QFPNTLLSLT (66 aa)) are Cytoplasmic-facing. The helical transmembrane segment at 595–615 (LSFIQFVSGSFVAILGILTIF) threads the bilayer. Residues 616 to 629 (DPDNFLNFEITPDR) lie on the Lumenal side of the membrane. Residues 630 to 650 (TVLFYMTVFGTLWAVCHSSIN) form a helical membrane-spanning segment. At 651 to 696 (DEYTVLKPEETLEELVSYTHYAPKEWKGKYHTEDIKNEFCRLYNLR) the chain is on the cytoplasmic side. An intramembrane segment occupies 697–717 (ITLLLRELVSIIITPFILWFS). At 718–908 (LPKNSERIID…QYYKKSDRNR (191 aa)) the chain is on the cytoplasmic side.

This sequence belongs to the ATG9 family. As to quaternary structure, homotrimer; forms a homotrimer with a central pore that forms a path between the two membrane leaflets. Phosphorylated by ATG1. ATG1 phosphorylation is required for preautophagosome elongation.

It is found in the preautophagosomal structure membrane. The protein localises to the cytoplasmic vesicle membrane. Its subcellular location is the golgi apparatus membrane. The protein resides in the endoplasmic reticulum membrane. The catalysed reaction is a 1,2-diacyl-sn-glycero-3-phosphocholine(in) = a 1,2-diacyl-sn-glycero-3-phosphocholine(out). It catalyses the reaction a 1,2-diacyl-sn-glycero-3-phospho-L-serine(in) = a 1,2-diacyl-sn-glycero-3-phospho-L-serine(out). It carries out the reaction a 1,2-diacyl-sn-glycero-3-phosphoethanolamine(in) = a 1,2-diacyl-sn-glycero-3-phosphoethanolamine(out). The enzyme catalyses a 1,2-diacyl-sn-glycero-3-phospho-(1D-myo-inositol-3-phosphate)(in) = a 1,2-diacyl-sn-glycero-3-phospho-(1D-myo-inositol-3-phosphate)(out). In terms of biological role, phospholipid scramblase involved in autophagy and cytoplasm to vacuole transport (Cvt) vesicle formation. Cycles between the preautophagosomal structure/phagophore assembly site (PAS) and the cytoplasmic vesicle pool and supplies membrane for the growing autophagosome. Lipid scramblase activity plays a key role in preautophagosomal structure/phagophore assembly by distributing the phospholipids that arrive through ATG2 from the cytoplasmic to the luminal leaflet of the bilayer, thereby driving autophagosomal membrane expansion. Required for mitophagy. Also involved in endoplasmic reticulum-specific autophagic process and is essential for the survival of cells subjected to severe ER stress. Different machineries are required for anterograde trafficking to the PAS during either the Cvt pathway or bulk autophagy and for retrograde trafficking. This is Autophagy-related protein 9 (ATG9) from Kluyveromyces lactis (strain ATCC 8585 / CBS 2359 / DSM 70799 / NBRC 1267 / NRRL Y-1140 / WM37) (Yeast).